The following is a 192-amino-acid chain: Pyridoxal 5'-phosphate synthase subunit PdxT (192 aa).

L-glutamine is bound at residue Gly50 to Ser52. The Nucleophile role is filled by Cys82. Residues Arg109 and Ile136–Arg137 contribute to the L-glutamine site. Active-site charge relay system residues include His172 and Glu174.

The protein belongs to the glutaminase PdxT/SNO family. As to quaternary structure, in the presence of PdxS, forms a dodecamer of heterodimers. Only shows activity in the heterodimer.

The enzyme catalyses aldehydo-D-ribose 5-phosphate + D-glyceraldehyde 3-phosphate + L-glutamine = pyridoxal 5'-phosphate + L-glutamate + phosphate + 3 H2O + H(+). The catalysed reaction is L-glutamine + H2O = L-glutamate + NH4(+). It participates in cofactor biosynthesis; pyridoxal 5'-phosphate biosynthesis. Its function is as follows. Catalyzes the hydrolysis of glutamine to glutamate and ammonia as part of the biosynthesis of pyridoxal 5'-phosphate. The resulting ammonia molecule is channeled to the active site of PdxS. The polypeptide is Pyridoxal 5'-phosphate synthase subunit PdxT (Haemophilus influenzae (strain PittGG)).